Consider the following 545-residue polypeptide: Calcium-dependent protein kinase 10 (545 aa).

A disordered region spans residues 1–36 (MGNCNACVRPDSKESKPSSKPKKPNRDRKLNPFAGD). G2 is lipidated: N-myristoyl glycine. One can recognise a Protein kinase domain in the interval 63–321 (YILGRELGRG…AQQVLAHPWI (259 aa)). ATP is bound by residues 69-77 (LGRGEFGIT) and K92. D187 functions as the Proton acceptor in the catalytic mechanism. At S227 the chain carries Phosphoserine. The tract at residues 327–357 (APNVPLGDIVRSRLKQFSMMNRFKKKVLRVI) is autoinhibitory domain. EF-hand domains are found at residues 364–399 (QEVE…VGSQ), 400–435 (LGEP…LQKI), 436–471 (ENDE…ELGE), and 472–507 (PDAS…GTDW). Residues D377, D379, D381, K383, E388, D413, D415, N417, E424, D449, D451, S453, Y455, E460, D485, D487, D489, R491, and E496 each coordinate Ca(2+).

This sequence belongs to the protein kinase superfamily. Ser/Thr protein kinase family. CDPK subfamily.

Its subcellular location is the membrane. The enzyme catalyses L-seryl-[protein] + ATP = O-phospho-L-seryl-[protein] + ADP + H(+). It carries out the reaction L-threonyl-[protein] + ATP = O-phospho-L-threonyl-[protein] + ADP + H(+). Its activity is regulated as follows. Activated by calcium. Autophosphorylation may play an important role in the regulation of the kinase activity. Its function is as follows. May play a role in signal transduction pathways that involve calcium as a second messenger. May be a positive regulator controlling stress signal transduction. In Arabidopsis thaliana (Mouse-ear cress), this protein is Calcium-dependent protein kinase 10 (CPK10).